Here is a 115-residue protein sequence, read N- to C-terminus: Inner membrane protein YidH (115 aa).

The Cytoplasmic segment spans residues 1-30; that stretch reads MKISRLGEAPDYRFSLANERTFLAWIRTAL. A helical transmembrane segment spans residues 31–51; it reads GFLAAGVGLDQLAPDFATPVI. Residues 52–53 lie on the Periplasmic side of the membrane; it reads RE. The chain crosses the membrane as a helical span at residues 54–74; it reads LLALLLCLFSGGLAMYGYLRW. The Cytoplasmic portion of the chain corresponds to 75-92; sequence LRNEKAMRLKEDLPYTNS. A helical membrane pass occupies residues 93–113; that stretch reads LLIISLILMVVAVIVMGLVLY. The Periplasmic segment spans residues 114–115; the sequence is AG.

To M.tuberculosis Rv2272.

It is found in the cell inner membrane. The chain is Inner membrane protein YidH (yidH) from Escherichia coli O157:H7.